We begin with the raw amino-acid sequence, 295 residues long: GTPase Era (295 aa).

Residues Lys7–Trp176 form the Era-type G domain. The segment at Gly15–Ser22 is G1. Gly15–Ser22 serves as a coordination point for GTP. A G2 region spans residues Gln41–Ser45. The tract at residues Asp62–Gly65 is G3. Residues Asp62–Ile66 and Asn124–Asp127 each bind GTP. Residues Asn124–Asp127 form a G4 region. Residues Ile152 to Ala154 form a G5 region. The region spanning Leu204–Glu281 is the KH type-2 domain.

Belongs to the TRAFAC class TrmE-Era-EngA-EngB-Septin-like GTPase superfamily. Era GTPase family. In terms of assembly, monomer.

It is found in the cytoplasm. It localises to the cell inner membrane. An essential GTPase that binds both GDP and GTP, with rapid nucleotide exchange. Plays a role in 16S rRNA processing and 30S ribosomal subunit biogenesis and possibly also in cell cycle regulation and energy metabolism. This chain is GTPase Era, found in Rickettsia bellii (strain RML369-C).